The following is a 376-amino-acid chain: MIQKPQMYVYIYLFVLIAAGPVDLNEDSEREANVEKEGLCNACAWRQNTRYSRIEAIKIQILSKLRLETAPNISKDAIRQLLPRAPPLRELIDQYDVQRDDSSDGSLEDDDYHATTETIITMPTESDFLMQADGKPKCCFFKFSSKIQYNKVVKAQLWIYLRAVKTPTTVFVQILRLIKPMKDGTRYTGIRSLKLDMSPGTGIWQSIDVKTVLQNWLKQPESNLGIEIKALDENGHDLAVTFPGPGEDGLNPFLEVKVTDTPKRSRRDFGLDCDEHSTESRCCRYPLTVDFEAFGWDWIIAPKRYKANYCSGECEFVFLQKYPHTHLVHQANPRGSAGPCCTPTKMSPINMLYFNGKEQIIYGKIPAMVVDRCGCS.

The first 24 residues, 1–24, serve as a signal peptide directing secretion; the sequence is MIQKPQMYVYIYLFVLIAAGPVDL. A propeptide spanning residues 25–267 is cleaved from the precursor; the sequence is NEDSEREANV…VTDTPKRSRR (243 aa). A glycan (N-linked (GlcNAc...) asparagine) is linked at Asn72. 4 disulfide bridges follow: Cys273/Cys283, Cys282/Cys341, Cys310/Cys373, and Cys314/Cys375.

The protein belongs to the TGF-beta family. In terms of assembly, homodimer; disulfide-linked. Interacts with WFIKKN2, leading to inhibit its activity. Interacts with FSTL3. Post-translationally, synthesized as large precursor molecule that undergoes proteolytic cleavage to generate an N-terminal propeptide and a disulfide linked C-terminal dimer, which is the biologically active molecule. The circulating form consists of a latent complex of the C-terminal dimer and other proteins, including its propeptide, which maintain the C-terminal dimer in a latent, inactive state. Ligand activation requires additional cleavage of the prodomain by a tolloid-like metalloproteinase.

It localises to the secreted. In terms of biological role, acts specifically as a negative regulator of skeletal muscle growth. This chain is Growth/differentiation factor 8 (Mstn), found in Rattus norvegicus (Rat).